Consider the following 493-residue polypeptide: Glutamyl-tRNA(Gln) amidotransferase subunit A (493 aa).

Residues Lys-79 and Ser-159 each act as charge relay system in the active site. Ser-183 (acyl-ester intermediate) is an active-site residue.

This sequence belongs to the amidase family. GatA subfamily. As to quaternary structure, heterotrimer of A, B and C subunits.

It carries out the reaction L-glutamyl-tRNA(Gln) + L-glutamine + ATP + H2O = L-glutaminyl-tRNA(Gln) + L-glutamate + ADP + phosphate + H(+). Its function is as follows. Allows the formation of correctly charged Gln-tRNA(Gln) through the transamidation of misacylated Glu-tRNA(Gln) in organisms which lack glutaminyl-tRNA synthetase. The reaction takes place in the presence of glutamine and ATP through an activated gamma-phospho-Glu-tRNA(Gln). The sequence is that of Glutamyl-tRNA(Gln) amidotransferase subunit A from Rhizobium johnstonii (strain DSM 114642 / LMG 32736 / 3841) (Rhizobium leguminosarum bv. viciae).